Reading from the N-terminus, the 199-residue chain is Cytochrome c oxidase subunit 2 (199 aa).

The chain crosses the membrane as a helical span at residues 1-13 (AICSLVLYLLTLM). Residues 14 to 26 (LMEKLSSNTVDAQ) lie on the Mitochondrial matrix side of the membrane. A helical membrane pass occupies residues 27–54 (EVELIWTILPAIVLILLALPSLQILYMM). The Mitochondrial intermembrane segment spans residues 55–199 (DEIDEPDLTL…SSLLSISSSL (145 aa)). 6 residues coordinate Cu cation: His128, Cys163, Glu165, Cys167, His171, and Met174. Glu165 is a Mg(2+) binding site.

This sequence belongs to the cytochrome c oxidase subunit 2 family. As to quaternary structure, component of the cytochrome c oxidase (complex IV, CIV), a multisubunit enzyme composed of 14 subunits. The complex is composed of a catalytic core of 3 subunits MT-CO1, MT-CO2 and MT-CO3, encoded in the mitochondrial DNA, and 11 supernumerary subunits COX4I, COX5A, COX5B, COX6A, COX6B, COX6C, COX7A, COX7B, COX7C, COX8 and NDUFA4, which are encoded in the nuclear genome. The complex exists as a monomer or a dimer and forms supercomplexes (SCs) in the inner mitochondrial membrane with NADH-ubiquinone oxidoreductase (complex I, CI) and ubiquinol-cytochrome c oxidoreductase (cytochrome b-c1 complex, complex III, CIII), resulting in different assemblies (supercomplex SCI(1)III(2)IV(1) and megacomplex MCI(2)III(2)IV(2)). Found in a complex with TMEM177, COA6, COX18, COX20, SCO1 and SCO2. Interacts with TMEM177 in a COX20-dependent manner. Interacts with COX20. Interacts with COX16. Cu cation serves as cofactor.

Its subcellular location is the mitochondrion inner membrane. It carries out the reaction 4 Fe(II)-[cytochrome c] + O2 + 8 H(+)(in) = 4 Fe(III)-[cytochrome c] + 2 H2O + 4 H(+)(out). In terms of biological role, component of the cytochrome c oxidase, the last enzyme in the mitochondrial electron transport chain which drives oxidative phosphorylation. The respiratory chain contains 3 multisubunit complexes succinate dehydrogenase (complex II, CII), ubiquinol-cytochrome c oxidoreductase (cytochrome b-c1 complex, complex III, CIII) and cytochrome c oxidase (complex IV, CIV), that cooperate to transfer electrons derived from NADH and succinate to molecular oxygen, creating an electrochemical gradient over the inner membrane that drives transmembrane transport and the ATP synthase. Cytochrome c oxidase is the component of the respiratory chain that catalyzes the reduction of oxygen to water. Electrons originating from reduced cytochrome c in the intermembrane space (IMS) are transferred via the dinuclear copper A center (CU(A)) of subunit 2 and heme A of subunit 1 to the active site in subunit 1, a binuclear center (BNC) formed by heme A3 and copper B (CU(B)). The BNC reduces molecular oxygen to 2 water molecules using 4 electrons from cytochrome c in the IMS and 4 protons from the mitochondrial matrix. The polypeptide is Cytochrome c oxidase subunit 2 (MT-CO2) (Casuarius bennetti (Dwarf cassowary)).